Here is a 64-residue protein sequence, read N- to C-terminus: Large ribosomal subunit protein bL35 (64 aa).

A compositionally biased stretch (basic residues) spans 22-31; the sequence is GKVKHGHAYR. The segment at 22–64 is disordered; that stretch reads GKVKHGHAYRSHLAQSKTTKQKRQSRKSTLMNNSDFKRLKKLI.

The protein belongs to the bacterial ribosomal protein bL35 family.

The sequence is that of Large ribosomal subunit protein bL35 from Mesomycoplasma hyopneumoniae (strain 232) (Mycoplasma hyopneumoniae).